Consider the following 360-residue polypeptide: (+)-6a-hydroxymaackiain 3-O-methyltransferase 1 (360 aa).

S-adenosyl-L-methionine is bound by residues 202 to 205 (VAGG), D226, 226 to 227 (DQ), 246 to 247 (DM), and K260. Residue H264 is the Proton acceptor of the active site.

It belongs to the class I-like SAM-binding methyltransferase superfamily. Cation-independent O-methyltransferase family. COMT subfamily.

It carries out the reaction (+)-6a-hydroxymaackiain + S-adenosyl-L-methionine = (+)-pisatin + S-adenosyl-L-homocysteine + H(+). The enzyme catalyses a 4'-hydroxyisoflavone + S-adenosyl-L-methionine = a 4'-methoxyisoflavone + S-adenosyl-L-homocysteine + H(+). In terms of biological role, methyltransferase involved in the phytoalexin pisatin biosynthesis. Has both 3- and 4'-O-methyltransferase activities. Can use (+)-6a-hydroxymaackiain, 2,7,4'-trihydroxyisoflavanone and with much less activity (+)-medicarpin as substrates, but not (-)-6a-hydroxymaackiain, daidzein, formononetin or isoliquiritigenin. May be involved in formononetin biosynthesis. The polypeptide is (+)-6a-hydroxymaackiain 3-O-methyltransferase 1 (HMM1) (Pisum sativum (Garden pea)).